The primary structure comprises 757 residues: Relaxin receptor 1 (757 aa).

Over 1–408 (MTSGSVFFYI…LENLLASIIQ (408 aa)) the chain is Extracellular. The 38-residue stretch at 26–63 (KCSLGYFPCGNITKCLPQLLHCNGVDDCGNQADEDNCG) folds into the LDL-receptor class A domain. 3 disulfide bridges follow: cysteine 27-cysteine 40, cysteine 34-cysteine 53, and cysteine 47-cysteine 62. A glycan (N-linked (GlcNAc...) asparagine) is linked at asparagine 36. Residues leucine 45, asparagine 48, valine 50, aspartate 52, aspartate 58, and glutamate 59 each coordinate Ca(2+). Positions 91-127 (ETPECLVGSVPVQCLCRGLELDCDETNLRAVPSVSSN) constitute an LRRNT domain. An N-linked (GlcNAc...) asparagine glycan is attached at asparagine 127. LRR repeat units lie at residues 151-172 (DLQK…AFRG), 175-196 (SLTK…VFED), 199-220 (RLEW…TFYG), 223-244 (SLIL…PLCQ), 248-269 (RLHW…TLIS), 272-293 (NLTV…TFAP), 296-317 (KLDE…IFKD), 320-341 (ELSQ…QFDY), and 344-365 (KLKS…MFRP). Residues asparagine 264 and asparagine 272 are each glycosylated (N-linked (GlcNAc...) asparagine). Asparagine 325 is a glycosylation site (N-linked (GlcNAc...) asparagine). The N-linked (GlcNAc...) asparagine glycan is linked to asparagine 368. A helical membrane pass occupies residues 409–429 (RVFVWVVSAVTCFGNVFVICM). The Cytoplasmic segment spans residues 430 to 443 (RPYIRSENKLYAMS). A helical membrane pass occupies residues 444 to 464 (IISLCCADCLMGIYLFVIGGF). The Extracellular segment spans residues 465–486 (DLKFRGEYNKHAQLWMESTHCQ). Cysteine 485 and cysteine 563 are disulfide-bonded. Residues 487-507 (LVGSLAILSTEVSVLLLTFLT) form a helical membrane-spanning segment. Over 508 to 527 (LEKYICIVYPFRCVRPGKCR) the chain is Cytoplasmic. A helical membrane pass occupies residues 528 to 548 (TITVLILIWITGFIVAFIPLS). The Extracellular segment spans residues 549 to 577 (NKEFFKNYYGTNGVCFPLHSEDTESIGAQ). A helical membrane pass occupies residues 578–598 (VYSVAIFLGINLAAFIIIVFS). Topologically, residues 599-629 (YGSMFYSVHQSAITATEIRNQVKKEMILAKR) are cytoplasmic. The chain crosses the membrane as a helical span at residues 630–650 (FFFIVFTDALCWIPIFVVKFL). Residues 651–660 (SLLQVEIPGT) lie on the Extracellular side of the membrane. Residues 661–681 (ITSWVVIFILPINSALNPILY) traverse the membrane as a helical segment. Over 682 to 757 (TLTTRPFKEM…SQSTRLNSYS (76 aa)) the chain is Cytoplasmic.

This sequence belongs to the G-protein coupled receptor 1 family. In terms of assembly, interacts with C1QTNF8.

The protein localises to the cell membrane. Receptor for relaxins. The activity of this receptor is mediated by G proteins leading to stimulation of adenylate cyclase and an increase of cAMP. Binding of the ligand may also activate a tyrosine kinase pathway that inhibits the activity of a phosphodiesterase that degrades cAMP. The polypeptide is Relaxin receptor 1 (RXFP1) (Pongo abelii (Sumatran orangutan)).